A 542-amino-acid polypeptide reads, in one-letter code: Chaperonin GroEL 3 (542 aa).

Residues 29–32 (TLGP), 86–90 (DGTTT), Gly-413, 477–479 (NAA), and Asp-493 each bind ATP.

This sequence belongs to the chaperonin (HSP60) family. Forms a cylinder of 14 subunits composed of two heptameric rings stacked back-to-back. Interacts with the co-chaperonin GroES.

It is found in the cytoplasm. The catalysed reaction is ATP + H2O + a folded polypeptide = ADP + phosphate + an unfolded polypeptide.. Together with its co-chaperonin GroES, plays an essential role in assisting protein folding. The GroEL-GroES system forms a nano-cage that allows encapsulation of the non-native substrate proteins and provides a physical environment optimized to promote and accelerate protein folding. The protein is Chaperonin GroEL 3 of Frankia alni (strain DSM 45986 / CECT 9034 / ACN14a).